We begin with the raw amino-acid sequence, 323 residues long: Global nitrogen regulator NrpRI (323 aa).

The winged helix-turn-helix stretch occupies residues 11–76; it reads IEIMRVIHES…TLTDLGENEM (66 aa). An NRD region spans residues 86–323; that stretch reads GFVISRIEEM…MLDYQTMKEI (238 aa).

Belongs to the NrpR family. In terms of assembly, forms a complex with NrpRII and the general archaeal transcription factors TBP and TFB. Interacts directly with NrpRII.

Its activity is regulated as follows. Under nitrogen limitation, binding of 2-oxoglutarate to the NrpRI/NrpRII complex decreases the binding affinity of NrpRI to DNA as well as the binding affinity of NrpRII to TBP and TFB, which leads to removal of the complex from the operator, RNA polymerase recruitment and initiation of transcription. Plays a major role in nitrogen regulation. Under nitrogen sufficiency, binds to the nifH and the glnk1 promoters, leading to repression of the transcription of the genes. This is Global nitrogen regulator NrpRI from Methanosarcina mazei (strain ATCC BAA-159 / DSM 3647 / Goe1 / Go1 / JCM 11833 / OCM 88) (Methanosarcina frisia).